The primary structure comprises 218 residues: Trichothecene biosynthesis transcription regulator TRI6 (218 aa).

Residues 154 to 181 form a disordered region; that stretch reads SQSTNDPGDAGKKGFATRKDRARHEAKH. A compositionally biased stretch (basic and acidic residues) spans 162-176; that stretch reads DAGKKGFATRKDRAR. Residues 185 to 215 form a C2H2-type zinc finger; the sequence is IRCQWRDNNGDQCTRTFSRMDNMRDHFRRIH.

It localises to the nucleus. Functionally, transcriptional activator of part of the trichothecene biosynthesis cluster that mediates the production of the antimicrobial trichothecene harzianum A (HA) that plays a role in Botrytis cinerea antagonistic activity and plant defense priming. Regulates expression of both trichothecene and mevalonate pathway genes. The protein is Trichothecene biosynthesis transcription regulator TRI6 of Trichoderma arundinaceum.